The chain runs to 46 residues: Mu-segestritoxin-Sf1h (46 aa).

Intrachain disulfides connect C3–C19, C10–C22, C18–C42, and C24–C40. The tract at residues 31-33 is keys region for toxin activity; that stretch reads RPW.

It belongs to the neurotoxin 16 (SFI) family. As to expression, expressed by the venom gland.

It localises to the secreted. In terms of biological role, insecticidal toxin. It inhibits insect voltage-gated sodium channels (Nav) by partially blocking the channel pore in DUM neurons from the American cockroach, not by acting as a gating modifier. The inhibition is only partially reversible after prolonged washout. In vivo, the toxin causes flaccid paralysis followed by death when injected into Heliothis virescens larvae. It also causes uncoordinated movements followed by full paralysis to sheep blowflies (Lucilia cuprina). When the toxin is fused to snowdrop lectin, it is orally active against larvae of the tomato moth (Laconobia oleracea), the rice brown planthopper (Nilaparvata lugens), and the peach-potato aphid (Myzus persicae). The chain is Mu-segestritoxin-Sf1h from Segestria florentina (Tube-web spider).